The following is a 28-amino-acid chain: Aspartate aminotransferase, mitochondrial (28 aa).

This sequence belongs to the class-I pyridoxal-phosphate-dependent aminotransferase family. Homodimer. It depends on pyridoxal 5'-phosphate as a cofactor.

The protein localises to the mitochondrion matrix. The enzyme catalyses L-aspartate + 2-oxoglutarate = oxaloacetate + L-glutamate. Functionally, plays a key role in amino acid metabolism. Important for metabolite exchange between mitochondria and cytosol. The chain is Aspartate aminotransferase, mitochondrial from Catharanthus roseus (Madagascar periwinkle).